A 434-amino-acid chain; its full sequence is Eukaryotic peptide chain release factor subunit 1-1 (434 aa).

Belongs to the eukaryotic release factor 1 family. As to quaternary structure, heterodimer of two subunits, one of which binds GTP.

Its subcellular location is the cytoplasm. In terms of biological role, directs the termination of nascent peptide synthesis (translation) in response to the termination codons UAA, UAG and UGA. Modulates plant growth and development. This Brassica oleracea var. botrytis (Cauliflower) protein is Eukaryotic peptide chain release factor subunit 1-1.